The following is a 504-amino-acid chain: Maturase K (504 aa).

It belongs to the intron maturase 2 family. MatK subfamily.

It localises to the plastid. The protein resides in the chloroplast. Usually encoded in the trnK tRNA gene intron. Probably assists in splicing its own and other chloroplast group II introns. This chain is Maturase K, found in Eichhornia crassipes (Water hyacinth).